The sequence spans 716 residues: Radial spoke head protein 4 homolog A (716 aa).

4 disordered regions span residues 1 to 164 (MEDS…CGRR), 375 to 410 (EGED…PKSF), 506 to 526 (GEEE…FEEN), and 697 to 716 (LLAA…DDYD). Positions 8 to 25 (KQEKENQEELGETRRPWE) are enriched in basic and acidic residues. Low complexity-rich tracts occupy residues 29–42 (AASP…SSEP), 54–66 (QSRS…PQSR), and 80–100 (SSPA…LAPA). The segment covering 140–156 (HHTSQSEGNTFQQSQQP) has biased composition (polar residues). A compositionally biased stretch (acidic residues) spans 375 to 389 (EGEDEEEVEEEDVAE). Ser-396 carries the phosphoserine modification. 2 stretches are compositionally biased toward acidic residues: residues 506 to 516 (GEEEGEEEEEA) and 701 to 716 (ENEE…DDYD).

The protein belongs to the flagellar radial spoke RSP4/6 family. As to quaternary structure, interacts with RSPH6A. Expressed in trachea, lungs, and testes. Very strong expression is detected in nasal brushings.

Its subcellular location is the cytoplasm. It is found in the cytoskeleton. It localises to the cilium axoneme. The protein resides in the cell projection. The protein localises to the cilium. Its function is as follows. Component of the axonemal radial spoke head which plays an important role in ciliary motility. Essential for triplet radial spokes (RS1, RS2 and RS3) head assembly in the motile cilia. The sequence is that of Radial spoke head protein 4 homolog A (RSPH4A) from Homo sapiens (Human).